A 481-amino-acid polypeptide reads, in one-letter code: UDP-glycosyltransferase 73B3 (481 aa).

His21 functions as the Proton acceptor in the catalytic mechanism. His21 contributes to the an anthocyanidin binding site. The active-site Charge relay is the Asp132. Ala355, Gln357, His372, Trp375, Asn376, Ser377, and Glu380 together coordinate UDP-alpha-D-glucose. Position 395 (Ala395) interacts with an anthocyanidin. The UDP-alpha-D-glucose site is built by Glu396 and Gln397.

The protein belongs to the UDP-glycosyltransferase family. As to expression, expressed in roots and flowers.

It catalyses the reaction a flavonol + UDP-alpha-D-glucose = a flavonol 3-O-beta-D-glucoside + UDP + H(+). Its function is as follows. Possesses quercetin 3-O-glucosyltransferase activity in vitro. Also active in vitro on benzoates and benzoate derivatives. Involved in stress or defense responses. This Arabidopsis thaliana (Mouse-ear cress) protein is UDP-glycosyltransferase 73B3 (UGT73B3).